Reading from the N-terminus, the 156-residue chain is 6,7-dimethyl-8-ribityllumazine synthase (156 aa).

Residues Phe22, 56-58 (AFE), and 80-82 (AVI) each bind 5-amino-6-(D-ribitylamino)uracil. Position 85–86 (85–86 (ST)) interacts with (2S)-2-hydroxy-3-oxobutyl phosphate. His88 serves as the catalytic Proton donor. 5-amino-6-(D-ribitylamino)uracil is bound at residue Phe113. Residue Arg127 participates in (2S)-2-hydroxy-3-oxobutyl phosphate binding.

The protein belongs to the DMRL synthase family.

The catalysed reaction is (2S)-2-hydroxy-3-oxobutyl phosphate + 5-amino-6-(D-ribitylamino)uracil = 6,7-dimethyl-8-(1-D-ribityl)lumazine + phosphate + 2 H2O + H(+). Its pathway is cofactor biosynthesis; riboflavin biosynthesis; riboflavin from 2-hydroxy-3-oxobutyl phosphate and 5-amino-6-(D-ribitylamino)uracil: step 1/2. Its function is as follows. Catalyzes the formation of 6,7-dimethyl-8-ribityllumazine by condensation of 5-amino-6-(D-ribitylamino)uracil with 3,4-dihydroxy-2-butanone 4-phosphate. This is the penultimate step in the biosynthesis of riboflavin. The polypeptide is 6,7-dimethyl-8-ribityllumazine synthase (Caldicellulosiruptor saccharolyticus (strain ATCC 43494 / DSM 8903 / Tp8T 6331)).